The following is a 258-amino-acid chain: Imidazole glycerol phosphate synthase subunit HisF (258 aa).

Catalysis depends on residues Asp11 and Asp130.

This sequence belongs to the HisA/HisF family. As to quaternary structure, heterodimer of HisH and HisF.

The protein resides in the cytoplasm. The enzyme catalyses 5-[(5-phospho-1-deoxy-D-ribulos-1-ylimino)methylamino]-1-(5-phospho-beta-D-ribosyl)imidazole-4-carboxamide + L-glutamine = D-erythro-1-(imidazol-4-yl)glycerol 3-phosphate + 5-amino-1-(5-phospho-beta-D-ribosyl)imidazole-4-carboxamide + L-glutamate + H(+). It functions in the pathway amino-acid biosynthesis; L-histidine biosynthesis; L-histidine from 5-phospho-alpha-D-ribose 1-diphosphate: step 5/9. Its function is as follows. IGPS catalyzes the conversion of PRFAR and glutamine to IGP, AICAR and glutamate. The HisF subunit catalyzes the cyclization activity that produces IGP and AICAR from PRFAR using the ammonia provided by the HisH subunit. This is Imidazole glycerol phosphate synthase subunit HisF from Yersinia pestis (strain Pestoides F).